The primary structure comprises 190 residues: Calcium-binding protein NCS-1 (190 aa).

G2 carries the N-myristoyl glycine lipid modification. 4 consecutive EF-hand domains span residues 40 to 58 (SGHL…FFPF), 60 to 95 (DPSA…TSRG), 96 to 131 (ELND…IYKM), and 144 to 179 (TPEK…DPTI). Residues D73, D75, N77, Y79, E84, D109, D111, N113, E120, D157, N159, D161, Q163, and E168 each contribute to the Ca(2+) site.

This sequence belongs to the recoverin family.

It is found in the membrane. Its function is as follows. Negatively regulates sporulation perhaps by controlling Ca(2+)-dependent desensitization of git3. The polypeptide is Calcium-binding protein NCS-1 (ncs1) (Schizosaccharomyces pombe (strain 972 / ATCC 24843) (Fission yeast)).